We begin with the raw amino-acid sequence, 337 residues long: uncharacterized protein (337 aa).

2 consecutive transmembrane segments (helical) span residues 4-24 and 26-46; these read FIFF…FSLI and LLLW…LFVL.

This sequence belongs to the plectrovirus ORF2 family.

It localises to the host membrane. This is an uncharacterized protein from Spiroplasma virus SpV1-R8A2 B (SpV1).